We begin with the raw amino-acid sequence, 256 residues long: Fumarate reductase cytochrome b subunit (256 aa).

Residues 1–30 (MTNESILESYSGVTPERKKSRMPAKLDWWQ) are Cytoplasmic-facing. Residues 31-52 (SATGLFLGLFMIGHMFFVSTIL) traverse the membrane as a helical segment. His-44 lines the heme b pocket. Over 53 to 76 (LGDNVMLWVTKKFELDFIFEGGKP) the chain is Periplasmic. Residues 77–98 (IVVSFLAAFVFAVFIAHAFLAM) traverse the membrane as a helical segment. Heme b is bound at residue His-93. The Cytoplasmic segment spans residues 99 to 124 (RKFPINYRQYLTFKTHKDLMRHGDTT). Residues 125–149 (LWWIQAMTGFAMFFLGSVHLYIMMT) traverse the membrane as a helical segment. Residue His-143 participates in heme b binding. Topologically, residues 150 to 165 (QPQTIGPVSSSFRMVS) are periplasmic. Residues 166–188 (EWMWPLYLVLLFAVELHGSVGLY) form a helical membrane-spanning segment. His-182 serves as a coordination point for heme b. Over 189–206 (RLAVKWGWFDGETPDKTR) the chain is Cytoplasmic. Residues 207 to 230 (ANLKKLKTLMSAFLIVLGLLTFGA) form a helical membrane-spanning segment. Residues 231–256 (YVKKGLEQTDPNIDYKYFDYKRTHHR) are Periplasmic-facing.

It belongs to the diheme cytochrome b FrdC family. As to quaternary structure, part of an enzyme complex containing three subunits: a flavoprotein (frdA), an iron-sulfur protein (frdB), and diheme cytochrome b (frdC). The cofactor is heme b.

The protein resides in the cell inner membrane. Functionally, the fumarate reductase enzyme complex is required for fumarate respiration using formate or sulfide as electron donor. This subunit anchors the complex in the membrane and binds a diheme cytochrome b. This is Fumarate reductase cytochrome b subunit (frdC) from Wolinella succinogenes (strain ATCC 29543 / DSM 1740 / CCUG 13145 / JCM 31913 / LMG 7466 / NCTC 11488 / FDC 602W) (Vibrio succinogenes).